Reading from the N-terminus, the 62-residue chain is uncharacterized protein (62 aa).

Residues 38-62 form a disordered region; it reads VKSESDTADSKRSAEAKADEAPAKM.

This is an uncharacterized protein from Schizosaccharomyces pombe (strain 972 / ATCC 24843) (Fission yeast).